The following is a 132-amino-acid chain: Large ribosomal subunit protein bL21 (132 aa).

The tract at residues 104 to 132 (GKAPSIGPRPPREKKPVVETSAEADDAAA) is disordered.

It belongs to the bacterial ribosomal protein bL21 family. In terms of assembly, part of the 50S ribosomal subunit. Contacts protein L20.

In terms of biological role, this protein binds to 23S rRNA in the presence of protein L20. In Rhodopseudomonas palustris (strain BisB18), this protein is Large ribosomal subunit protein bL21.